The primary structure comprises 454 residues: DNA-binding protein (454 aa).

The interval 1–41 (MSHKKVVAISESSSDEEVPVAPPTAPPKKRQRKAVEEPRGH) is disordered. Y129 carries the phosphotyrosine; by host modification. Zn(2+) is bound by residues C213 and H215. Residues 226–260 (VEMDVNSENAQRALKENPEKTKIVSNRWGRNVVQF) form a flexible loop region. Residues C268, C284, C325, C327, C378, and C394 each coordinate Zn(2+). Residues 440-454 (TILPQGQHDDDLVLF) form a C-terminal arm, DBP binding region.

The protein belongs to the adenoviridae E2A DNA-binding protein family. Homomultimerizes on viral ssDNA bound to pTP. Forms a initiation complex with viral polymerase, pTP and hosts NFIA and POU2F1/OCT1. Interacts with host SRCAP.

It localises to the host nucleus. In terms of biological role, plays a role in the elongation phase of viral strand displacement replication by unwinding the template in an ATP-independent fashion, employing its capacity to form multimers. Also enhances the rate of initiation. Released from template upon second strand synthesis. Assembles in complex with viral pTP, viral pol, host NFIA and host POU2F1/OCT1 on viral origin of replication. Covers the whole ssDNA genome during synthesis. The complementary strand synthesis induces its relese from DNA template. May inhibit cellular transcription mediated by the interaction between host SRCAP and CBP. This Canine adenovirus serotype 1 (strain RI261) (CAdV-1) protein is DNA-binding protein.